We begin with the raw amino-acid sequence, 416 residues long: Serine hydroxymethyltransferase (416 aa).

(6S)-5,6,7,8-tetrahydrofolate is bound by residues L119 and 123–125 (GHL). Position 228 is an N6-(pyridoxal phosphate)lysine (K228). E243 provides a ligand contact to (6S)-5,6,7,8-tetrahydrofolate.

The protein belongs to the SHMT family. Homodimer. Pyridoxal 5'-phosphate serves as cofactor.

The protein resides in the cytoplasm. It carries out the reaction (6R)-5,10-methylene-5,6,7,8-tetrahydrofolate + glycine + H2O = (6S)-5,6,7,8-tetrahydrofolate + L-serine. The protein operates within one-carbon metabolism; tetrahydrofolate interconversion. Its pathway is amino-acid biosynthesis; glycine biosynthesis; glycine from L-serine: step 1/1. Its function is as follows. Catalyzes the reversible interconversion of serine and glycine with tetrahydrofolate (THF) serving as the one-carbon carrier. This reaction serves as the major source of one-carbon groups required for the biosynthesis of purines, thymidylate, methionine, and other important biomolecules. Also exhibits THF-independent aldolase activity toward beta-hydroxyamino acids, producing glycine and aldehydes, via a retro-aldol mechanism. The protein is Serine hydroxymethyltransferase of Desulforapulum autotrophicum (strain ATCC 43914 / DSM 3382 / VKM B-1955 / HRM2) (Desulfobacterium autotrophicum).